The chain runs to 553 residues: 3-amino-2-hydroxy-4-methoxybenzoate diazotase (553 aa).

The segment covering A157–A167 has biased composition (low complexity). The disordered stretch occupies residues A157 to V178.

The protein belongs to the ATP-dependent AMP-binding enzyme family.

The enzyme catalyses 3-amino-2-hydroxy-4-methoxybenzoate + nitrite + ATP = cremeomycin + AMP + diphosphate + H2O. The protein operates within antibiotic biosynthesis. In terms of biological role, part of a gene cluster involved in the biosynthesis of cremeomycin, a light-sensitive o-diazoquinone with antibacterial and antiproliferative effects. Catalyzes the last step of cremeomycin biosynthesis, the diazotization of 3-amino-2-hydroxy-4-methoxybenzoate (3,2,4-AHMBA) with nitrite to generate cremeomycin. In Streptomyces cremeus, this protein is 3-amino-2-hydroxy-4-methoxybenzoate diazotase.